Here is a 332-residue protein sequence, read N- to C-terminus: 2-oxoglutarate-dependent dioxygenase ecdK (332 aa).

Residues 178–294 (HASELRLNHY…RRSVAFFLKP (117 aa)) enclose the Fe2OG dioxygenase domain. Residues His206, Asp208, and His266 each contribute to the Fe cation site. Residue Arg285 coordinates 2-oxoglutarate.

It belongs to the iron/ascorbate-dependent oxidoreductase family. Requires Fe(2+) as cofactor.

Its pathway is antifungal biosynthesis. Its function is as follows. 2-oxoglutarate-dependent dioxygenase; part of the gene cluster that mediates the biosynthesis of echinocandin B, a fungal lipidated cyclic hexapeptide that acts as an antifungal agent. Linoleoyl-AMP, produced by the fatty-acyl-AMP ligase ecdI, is transferred to the initiation carrier domain (T0) of ecdA. The linoleoyl-S-phosphopantetheinyl-T0 is sequentially extended with L-ornithine, L-threonine, L-proline, L-homotyrosine, L-threonine, and 4R-methyl-L-proline to form the linear hexapeptide. Thereafter, the terminal condensation (C7) performs macrocyclization of the NRPS product and the cyclic scaffold is released from ecdA. All six of the amino acid residues are hydroxylated, including 4R,5R-dihydroxy-L-ornithine, 4R-hydroxyl-L-proline, 3S,4S-dihydroxy-L-homotyrosine, and 3S-hydroxyl-4S-methyl-L-prolin. In the pathway, all the hydroxylation reactions are proposed to occur following completion of the cyclic peptide, so the unhydroxylated precursor produced by ecdA will undergo six rounds of hydroxylation. Five hydroxylase genes (ecdG, ecdH, ecdK, htyE and htyF) are embedded within the echinocandin B (ecd) and L-homotyrosine (hty) clusters. This Aspergillus rugulosus (Emericella rugulosa) protein is 2-oxoglutarate-dependent dioxygenase ecdK.